The chain runs to 310 residues: Probable cell division protein WhiA (310 aa).

Positions 277–310 (SLKELAEQVPDGPISKSGVNHRLKKLHEIAENLR) form a DNA-binding region, H-T-H motif.

Belongs to the WhiA family.

Functionally, involved in cell division and chromosome segregation. The chain is Probable cell division protein WhiA from Lactobacillus delbrueckii subsp. bulgaricus (strain ATCC BAA-365 / Lb-18).